Reading from the N-terminus, the 179-residue chain is Gut granule loss protein 3 (179 aa).

The tract at residues 40-59 (DLDSASSGVGSSTCTEEQES) is disordered. Polar residues predominate over residues 42 to 54 (DSASSGVGSSTCT).

In Caenorhabditis elegans, this protein is Gut granule loss protein 3 (glo-3).